The following is a 529-amino-acid chain: Cytochrome P450 monooxygenase oblE (529 aa).

A helical membrane pass occupies residues 38-58 (WQYIVTLLIAIITYDQVMYIW). Cysteine 477 serves as a coordination point for heme.

Belongs to the cytochrome P450 family. Requires heme as cofactor.

Its subcellular location is the membrane. The protein operates within secondary metabolite biosynthesis; terpenoid biosynthesis. Its function is as follows. Cytochrome P450 monooxygenase; part of the gene cluster that mediates the biosynthesis of the sesterterpenes ophiobolins, fungal phytotoxins with potential anti-cancer activities. The first step of the pathway is performed by the sesterterpene synthase oblA that possesses both prenyl transferase and terpene cyclase activity, converting isopentenyl diphosphate and dimethylallyl diphosphate into geranylfarnesyl diphosphate (GFPP) and further converting GFPP into ophiobolin F, respectively. Other sesterterpenoids (C(25) terpenoids) are found as minor products of oblA. The cytochrome P450 monooxygenase oblB then catalyzes a four-step oxidative transformation of ophiobolin F to yield ophiobolin C. The function of the cytochrome P450 monooxygenase oblE has still to be determined. This chain is Cytochrome P450 monooxygenase oblE, found in Emericella variicolor (Aspergillus stellatus).